A 372-amino-acid polypeptide reads, in one-letter code: MTFQFNFTIEDHLENELTPIRDGALTLDSSKELSVSESQKGEERDRKCSAEQFDLPQDHLWEHKSMENAAPSQDTDSPLSAASSSRNLEPHGKQPSLRAAKEHAMPKDLKKMLENKVIETLPGFQHVKLSVVKTILLKENFPGENIVSKSFSSHSDLITGVYEGGLKIWECTFDLLAYFTKAKVKFAGKKVLDLGCGSGLLGITAFKGGSKEIHFQDYNSMVIDEVTLPNVVANSTLEDEENDVNEPDVKRCRKPKVTQLYKCRFFSGEWSEFCKLVLSSEKLFVKYDLILTSETIYNPDYYSNLHQTFLRLLSKNGRVLLASKAHYFGVGGGVHLFQKFVEERDVFKTRILKIIDEGLKRFIIEITFKFPG.

2 disordered regions span residues 30–55 and 68–103; these read SKEL…QFDL and NAAP…AKEH. Positions 39–49 are enriched in basic and acidic residues; sequence QKGEERDRKCS. The span at 70–87 shows a compositional bias: polar residues; that stretch reads APSQDTDSPLSAASSSRN. A phosphoserine mark is found at serine 72 and serine 77. A Tele-methylhistidine; by autocatalysis modification is found at histidine 154. S-adenosyl-L-methionine is bound by residues 168–172, glycine 195, and 216–218; these read IWECT and QDY. The Nuclear localization signal signature appears at 247-253; the sequence is PDVKRCR. S-adenosyl-L-methionine contacts are provided by residues 268–270 and serine 293; that span reads GEW.

This sequence belongs to the methyltransferase superfamily. METTL18 family. Interacts with GRWD1 and members of the heat shock protein 90 and 70 families; these proteins may possibly be methylation substrates for the enzyme. Post-translationally, monomethylated at His-154 through automethylation. Automethylation at His-154 positively regulates the methyltransferase activity toward RPL3. Probably methylated on other residues.

It is found in the cytoplasm. Its subcellular location is the cytosol. It localises to the nucleus. The protein localises to the nucleolus. The catalysed reaction is L-histidyl-[protein] + S-adenosyl-L-methionine = N(tele)-methyl-L-histidyl-[protein] + S-adenosyl-L-homocysteine + H(+). Functionally, protein-L-histidine N-tele-methyltransferase that specifically monomethylates RPL3, thereby regulating translation elongation. Histidine methylation of RPL3 regulates translation elongation by slowing ribosome traversal on tyrosine codons: slower elongation provides enough time for proper folding of synthesized proteins and prevents cellular aggregation of tyrosine-rich proteins. This is Histidine protein methyltransferase 1 homolog from Homo sapiens (Human).